A 2833-amino-acid chain; its full sequence is MKRGICLAALLCLFNYLGAGHGENAEEDIRNSEGKVNFFSLDSNLKKNKKSKHNRVKRRNAKISNFLSQKAYVKETDNASGKDAEGSRPSHDSSFVNLNGHVDGKSLSYSVHVKESTPHSTTRESTEKGKENEKIQGVLSSFVQSQEGGESDDLEGMYNSIVDMSEKLKENDKYNLVFDMEIDFVDLQFFNLILELIPKDSQYHTYYEETLKQQVTEYTNSLKTLMDSCISEKDQMIILEYEINYAKRKSIETETLGDKETKLSAVSQAYAKHLESYKGVLKPKLNDIKNNAFSVLKDSYCKDNCGEYVQKYNTMRKNFISSSDQYKMEAYVYIPKSINDYTVLDKILSESNELGIDIQETVNSLKLLGEEISEVSHLYVINSTLIDDAAKKLESINEEDESAEIDLQKFEDNSKALANNYCIFQYIKTLNEPIKKAYESKVIKSNELLSTIIDTLGKSATALQESTFDQEECNKIKTEAEKVKDDAEDICEKNEQIYYEIPESEDETIDDKINDLQDLIDQMKEYKDEIVNNSEFISNRYKNIYENLKETYETELNDIGKLENDTSKVNFYLMQIRKINTEKTKIDESLQTVEKFYKEILDSKEKIYELKIEFEKSVTEINRLQDGESARDLHEEQIKEILDKMAKKVHYLKELLSLKGKSSVYFTEMNELLNTASYDNMEGFSAKKEKADNDINALYNSVYREDINALIEEVEKFVTENKESTLEMLKDEEMEEKLQDAKETFAKLNFVSDDKLTDVYTKMSAEVTNAEGIKKEIAQKQFENVHKKMKEFSDAFSTKFEALQNSMQQYNQEGDAIEKHKQNRSEKEEEYFKNESVEEDLSREETEEQEYTKHKNNFSRRKGEISAEITNMREVINKIESQLNYYGVIEKYFSLIGDQNEVSTAKALKEKIVSDSLRDKIDQYETEFKEKTSAVENTVSTIQSLSKAIDSLKRLNGSINNCKKYNTDIDLLRSKIKTLREEVQKEIAETEGDKVVGENTTALLLKSLRDKMGKINEKLNDGRLNSLDTKKEDLLKFYSESKSKIHLSKDQKGPQDPLNRIDEWEDIKREVDELNVNYQVISENKVTLFKNNSVTYIEAMHSHINTVAHGITSNKNEILKSVKEVEDKLNLVEQNEDYKKVKNPENEKQLEAIRGSMSKLKEVINKHVSEMTQLESTANTLKSNAKGKENEHDLEELNKTKGQMRDIYEKLKKIAEELKEGTVNELKDANEKANKVELEFERNIIGHVLERITVEKDKAGKVVEEMNSLKTKIEKLIQETSDDSQNELVTTSITKHLENAKGYEDVIKRNEEDSIQLREKAKSLETLDEMKKLVQQVNMNLQSAIQGNAGISKELNELKGVIELLISTNYSSILEYVKKNSSESVRFSQLANGEFTKAEGEEKNASARLAEAEKLKEQIVKDLDYSDIDDKVKKIEGIKREILKMKESALTFWEESEKFKQMCSSHMENAKEGKKKIEYLKNNGDGGKANITDSQMEEVGNYVSKAEHAFHTVEAQVDKTKAFYESIVAYVTKMDNLFNESLMKEVKVKCEKKNDEAEQIFGQIKTVDGRIKARVSENERKISELKEKAKVEKKESSQLNDVSTKSLLQIDNCRQQLDSVLSNIGRVKQNALQYFDSADKSMKSVLPISELGAEKSLDKVKAAKESYEKNLETVQNEMSRINVEEGSLTDIDKKITDIENDLLKMKKQYEEGLLQKIKENADKRKSNFELVGSEINALLDPSTSIFIKLKLKEYDMTGDLKNYAVKMNEIHGEFTKSYNLIETHLSNATDYSVTFEKAQSLRELAEKEEEHLRRREEEAIKLLNDIKKVESLKLLKEMMKKVSAEYEGMKRDHTSVSQLVQDMKTIVDELKTLNDISECSSVLNNVVSIVKKVKESKHADYKRDANSMYESMVTLANYFLSDEAKISSGMEFNAEMKSNFKTDLELEIFSVISNSNELLKKIEQDSNDVIQKERESEQLAKDATDIYNVIKLKNEFNEKLEEAKNKEEVVSEKVREALKRLSQVEGIRCHFENFHRLLDNTEELENLKKMVTIYRDKKSEAPKESGLQEMENEMNTYSNSITQLEGIVVSAGESKEDIEKLERSNEEMRNISEKISTIDSKVIEMNSTIDELYKLGKNCQAHWISLISYTANMKTSKKLIMINKEKENTEKCVDYIKDNSSSTDGYVETLKGFYGSKLTFSSASEIVQNADTYSVNFAKHEKESLNAIRDIKKELYLFHQNSDISIVEGGVQNMLALYDKLNEEKREMDELYRNISETKLKQMEHSTDVFKPMIELHKGMNETNNKSLLEKEKKLKSVNDHMHSMEAEMIKNGLKYTPESVQNINNIYSVIEAEVKTLEEIDRDYGDNYQIVEEHKKQFSILIDRTNALMDDIEIFKKENNYNLMEVNTETIHRVNDYIEKITNKLVQAKTEYEQILENIKQNDDMLQNIFLKKVSIIEYFENVKKKKESILNDLYEQERLLKIGEHLDEIKRNVTETLSSYEIDQKMEMMSKNLLEKKSKMMNYTSIYELEREANEINRDAKQIKDDDTILNSVLEAAIQKRGDMDAIFSQMSADRNPNEYKSAEKYMNEANEIIRQLEVKLREIGQLVQDSESILSEMNSKKSAIEKEKTARALRTSENNRREEEERARVQEMSMNNDPTQSETTHSEGSIGEGKESDSDETGLTHDAGADEDSTSSAKGAHELEEEETTAPMEETEMNDNTLLGYDTTRSDEPDMHTENTQDGTYQDTSNSSDEADILNGKFNFNNVKYAGAFVLLCTSAVIGAIIAHKKDDQEELNNGVEDDKVFEVKKSMHPENKEEIIDDSFVDIEY.

Positions 1-22 are cleaved as a signal peptide; the sequence is MKRGICLAALLCLFNYLGAGHG. Over residues 75 to 91 the composition is skewed to basic and acidic residues; it reads ETDNASGKDAEGSRPSH. Disordered stretches follow at residues 75 to 95, 112 to 133, and 819 to 860; these read ETDN…DSSF, HVKE…KENE, and KHKQ…NFSR. The segment covering 819 to 836 has biased composition (basic and acidic residues); it reads KHKQNRSEKEEEYFKNES. Residues 837-849 are compositionally biased toward acidic residues; sequence VEEDLSREETEEQ. The Cell attachment site signature appears at 2563–2565; the sequence is RGD. The segment at 2619–2755 is disordered; the sequence is EMNSKKSAIE…GTYQDTSNSS (137 aa). Composition is skewed to basic and acidic residues over residues 2621 to 2633 and 2640 to 2652; these read NSKK…EKTA and ENNR…RARV. Over residues 2655-2670 the composition is skewed to polar residues; sequence MSMNNDPTQSETTHSE. Residues 2706–2720 show a composition bias toward acidic residues; sequence LEEEETTAPMEETEM. The span at 2731-2742 shows a compositional bias: basic and acidic residues; it reads TRSDEPDMHTEN. The span at 2743–2755 shows a compositional bias: polar residues; the sequence is TQDGTYQDTSNSS.

As to quaternary structure, homodimer.

The protein resides in the membrane. In terms of biological role, involved in reticulocyte adhesion. Specifically binds to human reticulocyte cells. The protein is Reticulocyte-binding protein 1 (RBP1) of Plasmodium vivax (strain Belem).